A 114-amino-acid chain; its full sequence is Iron-sulfur cluster insertion protein ErpA (114 aa).

Residues Cys-42, Cys-106, and Cys-108 each contribute to the iron-sulfur cluster site.

It belongs to the HesB/IscA family. In terms of assembly, homodimer. Iron-sulfur cluster is required as a cofactor.

Its function is as follows. Required for insertion of 4Fe-4S clusters for at least IspG. The chain is Iron-sulfur cluster insertion protein ErpA from Shigella boydii serotype 18 (strain CDC 3083-94 / BS512).